We begin with the raw amino-acid sequence, 320 residues long: ATP-dependent 6-phosphofructokinase (320 aa).

ATP is bound at residue G11. Residue 21 to 25 participates in ADP binding; it reads RAVTK. ATP is bound by residues 72–73 and 102–105; these read RF and GDGS. D103 provides a ligand contact to Mg(2+). 125 to 127 contacts substrate; the sequence is TID. D127 serves as the catalytic Proton acceptor. R154 contributes to the ADP binding site. Substrate is bound by residues R162 and 169 to 171; that span reads MGR. Residues 185–187 and 213–215 contribute to the ADP site; these read GAD and KDH. Substrate-binding positions include E222, R243, and 249–252; that span reads HMQR.

The protein belongs to the phosphofructokinase type A (PFKA) family. ATP-dependent PFK group I subfamily. Prokaryotic clade 'B1' sub-subfamily. Homotetramer. Mg(2+) is required as a cofactor.

Its subcellular location is the cytoplasm. It catalyses the reaction beta-D-fructose 6-phosphate + ATP = beta-D-fructose 1,6-bisphosphate + ADP + H(+). It functions in the pathway carbohydrate degradation; glycolysis; D-glyceraldehyde 3-phosphate and glycerone phosphate from D-glucose: step 3/4. Its activity is regulated as follows. Allosterically activated by ADP and other diphosphonucleosides, and allosterically inhibited by phosphoenolpyruvate. Functionally, catalyzes the phosphorylation of D-fructose 6-phosphate to fructose 1,6-bisphosphate by ATP, the first committing step of glycolysis. This chain is ATP-dependent 6-phosphofructokinase, found in Lactobacillus helveticus (strain DPC 4571).